A 397-amino-acid chain; its full sequence is Riboflavin biosynthesis protein RibBA (397 aa).

Positions 1 to 199 (MFHRIEEALE…IEDLIAYRRH (199 aa)) are DHBP synthase. D-ribulose 5-phosphate contacts are provided by residues 26 to 27 (RE), Asp-31, 138 to 142 (RAGHT), and Glu-162. Glu-27 is a Mg(2+) binding site. His-141 lines the Mg(2+) pocket. The tract at residues 200–397 (HETLVTREVE…ASKLGHLLNL (198 aa)) is GTP cyclohydrolase II. 250–254 (RVHSE) lines the GTP pocket. Positions 255, 266, and 268 each coordinate Zn(2+). GTP contacts are provided by residues Gln-271, 293–295 (EGR), and Thr-315. Asp-327 (proton acceptor; for GTP cyclohydrolase activity) is an active-site residue. The Nucleophile; for GTP cyclohydrolase activity role is filled by Arg-329. GTP-binding residues include Thr-350 and Lys-355.

It in the N-terminal section; belongs to the DHBP synthase family. This sequence in the C-terminal section; belongs to the GTP cyclohydrolase II family. Mg(2+) serves as cofactor. The cofactor is Mn(2+). Requires Zn(2+) as cofactor.

The enzyme catalyses D-ribulose 5-phosphate = (2S)-2-hydroxy-3-oxobutyl phosphate + formate + H(+). It carries out the reaction GTP + 4 H2O = 2,5-diamino-6-hydroxy-4-(5-phosphoribosylamino)-pyrimidine + formate + 2 phosphate + 3 H(+). The protein operates within cofactor biosynthesis; riboflavin biosynthesis; 2-hydroxy-3-oxobutyl phosphate from D-ribulose 5-phosphate: step 1/1. It functions in the pathway cofactor biosynthesis; riboflavin biosynthesis; 5-amino-6-(D-ribitylamino)uracil from GTP: step 1/4. Its function is as follows. Catalyzes the conversion of D-ribulose 5-phosphate to formate and 3,4-dihydroxy-2-butanone 4-phosphate. Catalyzes the conversion of GTP to 2,5-diamino-6-ribosylamino-4(3H)-pyrimidinone 5'-phosphate (DARP), formate and pyrophosphate. The chain is Riboflavin biosynthesis protein RibBA from Bacillus mycoides (strain KBAB4) (Bacillus weihenstephanensis).